We begin with the raw amino-acid sequence, 105 residues long: Nucleoid-associated protein SSP2277 (105 aa).

Residues methionine 1 to methionine 41 form a disordered region. The span at methionine 7–lysine 16 shows a compositional bias: low complexity. Over residues lysine 20 to valine 33 the composition is skewed to basic and acidic residues.

It belongs to the YbaB/EbfC family. Homodimer.

The protein resides in the cytoplasm. It is found in the nucleoid. In terms of biological role, binds to DNA and alters its conformation. May be involved in regulation of gene expression, nucleoid organization and DNA protection. This is Nucleoid-associated protein SSP2277 from Staphylococcus saprophyticus subsp. saprophyticus (strain ATCC 15305 / DSM 20229 / NCIMB 8711 / NCTC 7292 / S-41).